The sequence spans 125 residues: Large ribosomal subunit protein bL12 (125 aa).

It belongs to the bacterial ribosomal protein bL12 family. In terms of assembly, homodimer. Part of the ribosomal stalk of the 50S ribosomal subunit. Forms a multimeric L10(L12)X complex, where L10 forms an elongated spine to which 2 to 4 L12 dimers bind in a sequential fashion. Binds GTP-bound translation factors.

In terms of biological role, forms part of the ribosomal stalk which helps the ribosome interact with GTP-bound translation factors. Is thus essential for accurate translation. This chain is Large ribosomal subunit protein bL12, found in Rickettsia canadensis (strain McKiel).